Reading from the N-terminus, the 340-residue chain is Ketol-acid reductoisomerase (NADP(+)) (340 aa).

The KARI N-terminal Rossmann domain occupies 3 to 183 (VNIYYDKDCD…GGGRTGIIET (181 aa)). NADP(+) is bound by residues 26–29 (FGSQ), S54, and 84–87 (DELQ). The active site involves H109. G135 provides a ligand contact to NADP(+). The KARI C-terminal knotted domain occupies 184-329 (TFKDETETDL…KKLRAMMPWI (146 aa)). D192, E196, E228, and E232 together coordinate Mg(2+). Substrate is bound at residue S253.

This sequence belongs to the ketol-acid reductoisomerase family. Mg(2+) is required as a cofactor.

It carries out the reaction (2R)-2,3-dihydroxy-3-methylbutanoate + NADP(+) = (2S)-2-acetolactate + NADPH + H(+). The catalysed reaction is (2R,3R)-2,3-dihydroxy-3-methylpentanoate + NADP(+) = (S)-2-ethyl-2-hydroxy-3-oxobutanoate + NADPH + H(+). The protein operates within amino-acid biosynthesis; L-isoleucine biosynthesis; L-isoleucine from 2-oxobutanoate: step 2/4. It participates in amino-acid biosynthesis; L-valine biosynthesis; L-valine from pyruvate: step 2/4. Its function is as follows. Involved in the biosynthesis of branched-chain amino acids (BCAA). Catalyzes an alkyl-migration followed by a ketol-acid reduction of (S)-2-acetolactate (S2AL) to yield (R)-2,3-dihydroxy-isovalerate. In the isomerase reaction, S2AL is rearranged via a Mg-dependent methyl migration to produce 3-hydroxy-3-methyl-2-ketobutyrate (HMKB). In the reductase reaction, this 2-ketoacid undergoes a metal-dependent reduction by NADPH to yield (R)-2,3-dihydroxy-isovalerate. The sequence is that of Ketol-acid reductoisomerase (NADP(+)) from Campylobacter curvus (strain 525.92).